We begin with the raw amino-acid sequence, 93 residues long: Alpha-defensin 5 (93 aa).

The first 19 residues, 1–19, serve as a signal peptide directing secretion; the sequence is MKTFVLLSALVLLAFQVQA. A propeptide spanning residues 20 to 58 is cleaved from the precursor; sequence DPIHKTDEETNTEEQPGEEDQAVSISFGGQEGSALHEEL. Intrachain disulfides connect Cys-64-Cys-92, Cys-66-Cys-81, and Cys-71-Cys-91.

This sequence belongs to the alpha-defensin family.

The protein localises to the secreted. In terms of biological role, probably contributes to the antimicrobial barrier function of the small bowel mucosa. The protein is Alpha-defensin 5 (Defa5) of Mus musculus (Mouse).